Consider the following 61-residue polypeptide: MPSATRKNAPKGKCPICGAPTKAEFRPFCSRGCRDRDLLNWLGDAYRLPVKDLQAEDGDFD.

Zn(2+) contacts are provided by Cys-14, Cys-17, Cys-29, and Cys-33.

Belongs to the DNA gyrase inhibitor YacG family. Interacts with GyrB. Requires Zn(2+) as cofactor.

Functionally, inhibits all the catalytic activities of DNA gyrase by preventing its interaction with DNA. Acts by binding directly to the C-terminal domain of GyrB, which probably disrupts DNA binding by the gyrase. This chain is DNA gyrase inhibitor YacG, found in Zymomonas mobilis subsp. mobilis (strain ATCC 31821 / ZM4 / CP4).